A 302-amino-acid polypeptide reads, in one-letter code: 4-hydroxy-tetrahydrodipicolinate synthase (302 aa).

Residue Thr-46 participates in pyruvate binding. The Proton donor/acceptor role is filled by Tyr-134. The active-site Schiff-base intermediate with substrate is the Lys-162. Val-204 is a binding site for pyruvate.

It belongs to the DapA family. Homotetramer; dimer of dimers.

It localises to the cytoplasm. It carries out the reaction L-aspartate 4-semialdehyde + pyruvate = (2S,4S)-4-hydroxy-2,3,4,5-tetrahydrodipicolinate + H2O + H(+). The protein operates within amino-acid biosynthesis; L-lysine biosynthesis via DAP pathway; (S)-tetrahydrodipicolinate from L-aspartate: step 3/4. Its function is as follows. Catalyzes the condensation of (S)-aspartate-beta-semialdehyde [(S)-ASA] and pyruvate to 4-hydroxy-tetrahydrodipicolinate (HTPA). The chain is 4-hydroxy-tetrahydrodipicolinate synthase from Xylella fastidiosa (strain Temecula1 / ATCC 700964).